The sequence spans 193 residues: Der GTPase-activating protein YihI (193 aa).

The span at 1 to 12 (MSAKQPNRKPTG) shows a compositional bias: basic residues. 2 disordered regions span residues 1–91 (MSAK…KLVM) and 143–193 (IIDN…PKKK). The segment covering 13–26 (KRKESDASALDGRE) has biased composition (basic and acidic residues). The span at 27-36 (RKRAAKRKGL) shows a compositional bias: basic residues. Polar residues predominate over residues 40 to 54 (SRQQAEQSSKNNNGK). A compositionally biased stretch (acidic residues) spans 145-160 (DNDDDEEDDGSFDDAS). A compositionally biased stretch (basic and acidic residues) spans 184–193 (PEPKPEPKKK).

The protein belongs to the YihI family. In terms of assembly, interacts with Der.

A GTPase-activating protein (GAP) that modifies Der/EngA GTPase function. May play a role in ribosome biogenesis. In Aeromonas salmonicida (strain A449), this protein is Der GTPase-activating protein YihI.